A 74-amino-acid chain; its full sequence is Sec-independent protein translocase protein TatA (74 aa).

Residues 1–21 (MGSFSIWHWLIVLLIVVLVFG) traverse the membrane as a helical segment.

Belongs to the TatA/E family. In terms of assembly, the Tat system comprises two distinct complexes: a TatABC complex, containing multiple copies of TatA, TatB and TatC subunits, and a separate TatA complex, containing only TatA subunits. Substrates initially bind to the TatABC complex, which probably triggers association of the separate TatA complex to form the active translocon.

The protein resides in the cell inner membrane. Part of the twin-arginine translocation (Tat) system that transports large folded proteins containing a characteristic twin-arginine motif in their signal peptide across membranes. TatA could form the protein-conducting channel of the Tat system. This chain is Sec-independent protein translocase protein TatA, found in Nitrosospira multiformis (strain ATCC 25196 / NCIMB 11849 / C 71).